Here is a 262-residue protein sequence, read N- to C-terminus: DNA-directed RNA polymerase subunit Rpo3 (262 aa).

It belongs to the archaeal Rpo3/eukaryotic RPB3 RNA polymerase subunit family. As to quaternary structure, part of the RNA polymerase complex.

The protein resides in the cytoplasm. It carries out the reaction RNA(n) + a ribonucleoside 5'-triphosphate = RNA(n+1) + diphosphate. In terms of biological role, DNA-dependent RNA polymerase (RNAP) catalyzes the transcription of DNA into RNA using the four ribonucleoside triphosphates as substrates. This Pyrobaculum islandicum (strain DSM 4184 / JCM 9189 / GEO3) protein is DNA-directed RNA polymerase subunit Rpo3.